The sequence spans 335 residues: Zinc finger protein 396 (335 aa).

In terms of domain architecture, SCAN box spans 52-134 (RQQFRQFGYQ…TMLEDVEREL (83 aa)). 3 consecutive C2H2-type zinc fingers follow at residues 251 to 273 (QKCDECGKIFSQSSALILHQRIH), 279 to 301 (YACDECAKAFSRSAILIQHRRTH), and 307 to 329 (YKCHDCGKAFSQSSNLFRHRKRH).

The protein belongs to the krueppel C2H2-type zinc-finger protein family. Isoforms 1 and 2 can both homo- and hetero-associate. Expressed strongly in liver, moderately in skeletal muscle and weakly in kidney, pancreas, spleen and prostate.

Its subcellular location is the nucleus. The protein resides in the cytoplasm. Its function is as follows. Isoform 1 and isoform 2 act as DNA-dependent transcriptional repressors. The protein is Zinc finger protein 396 (ZNF396) of Homo sapiens (Human).